A 349-amino-acid chain; its full sequence is Protein-glutamate methylesterase/protein-glutamine glutaminase (349 aa).

The Response regulatory domain maps to 5-122 (RVLCVDDSAL…REGMLAYSEL (118 aa)). Asp-56 is subject to 4-aspartylphosphate. One can recognise a CheB-type methylesterase domain in the interval 152–344 (LLSSEKLIAI…QRMLAQISSG (193 aa)). Active-site residues include Ser-164, His-190, and Asp-286.

The protein belongs to the CheB family. Phosphorylated by CheA. Phosphorylation of the N-terminal regulatory domain activates the methylesterase activity.

The protein localises to the cytoplasm. It catalyses the reaction [protein]-L-glutamate 5-O-methyl ester + H2O = L-glutamyl-[protein] + methanol + H(+). It carries out the reaction L-glutaminyl-[protein] + H2O = L-glutamyl-[protein] + NH4(+). Involved in chemotaxis. Part of a chemotaxis signal transduction system that modulates chemotaxis in response to various stimuli. Catalyzes the demethylation of specific methylglutamate residues introduced into the chemoreceptors (methyl-accepting chemotaxis proteins or MCP) by CheR. Also mediates the irreversible deamidation of specific glutamine residues to glutamic acid. The polypeptide is Protein-glutamate methylesterase/protein-glutamine glutaminase (Yersinia pseudotuberculosis serotype I (strain IP32953)).